We begin with the raw amino-acid sequence, 491 residues long: MYRKSALELRDAVVNRELSVTAITEYFYHRIESHDEQIGAFLSLCKERALLRASRIDDKLAKGDPIGLLAGIPIGVKDNIHITGVKTTCASKMLENFVAPFDSTVVRRIEMEDGILLGKLNMDEFAMGSTTRYSAFHPTNNPWDLERVPGGSSGGSAAAVSARFCPIALGSDTGGSIRQPAAFCGVVGFKPSYGAVSRYGLVAFGSSLDQIGPLTTVVEDVALAMDAFAGRDPKDSTTRDFFKGTFSQALSLEVPKLIGVPRGFLDGLQEDCKENFFEALAVMEREGSRIIDVDLSVLKHAVPVYYIVASAEAATNLARFDGVRYGHRCAQADNMHEMYARSRKEGFGKEVTRRILLGNYVLSAERQNIFYKKGMAVRARLIDAFQAAFERCDVIAMPVCATPAIRDQDVLDPVSLYLQDVYTVAVNLAYLPAISVPSGLSKEGLPLGVQFIGERGSDQQICQVGYSFQEHSQIKQLYPKAVNGLFDGGIE.

Residues Lys-77 and Ser-152 each act as charge relay system in the active site. Ser-176 functions as the Acyl-ester intermediate in the catalytic mechanism.

The protein belongs to the amidase family. GatA subfamily. As to quaternary structure, heterotrimer of A, B and C subunits.

It catalyses the reaction L-glutamyl-tRNA(Gln) + L-glutamine + ATP + H2O = L-glutaminyl-tRNA(Gln) + L-glutamate + ADP + phosphate + H(+). Allows the formation of correctly charged Gln-tRNA(Gln) through the transamidation of misacylated Glu-tRNA(Gln) in organisms which lack glutaminyl-tRNA synthetase. The reaction takes place in the presence of glutamine and ATP through an activated gamma-phospho-Glu-tRNA(Gln). The chain is Glutamyl-tRNA(Gln) amidotransferase subunit A from Chlamydia trachomatis serovar A (strain ATCC VR-571B / DSM 19440 / HAR-13).